Consider the following 37-residue polypeptide: Cytochrome b6-f complex subunit 5 (37 aa).

Residues 5 to 25 (LLSGIVLGLIPVTLAGLFVTA) form a helical membrane-spanning segment.

Belongs to the PetG family. In terms of assembly, the 4 large subunits of the cytochrome b6-f complex are cytochrome b6, subunit IV (17 kDa polypeptide, PetD), cytochrome f and the Rieske protein, while the 4 small subunits are PetG, PetL, PetM and PetN. The complex functions as a dimer.

It is found in the plastid. The protein resides in the chloroplast thylakoid membrane. Functionally, component of the cytochrome b6-f complex, which mediates electron transfer between photosystem II (PSII) and photosystem I (PSI), cyclic electron flow around PSI, and state transitions. PetG is required for either the stability or assembly of the cytochrome b6-f complex. This is Cytochrome b6-f complex subunit 5 from Chlorokybus atmophyticus (Soil alga).